Here is a 282-residue protein sequence, read N- to C-terminus: MANQLILLKKDFFTDEQQAVTVADRYPQDVFAEHTHEFCELVMVWRGNGLHVLNERPYRITRGDLFYIRAEDKHSYTSVNDLVLQNIIYCPERLKLNINWQAMIPGFQGAQWHPHWRLGSMGMNQARQVINQLEHESNGRDPLANEMAELLFGQLVMTLKRHRYATDDLPATSRETLLDKLITALANSLECPFALDAFCQQEQCSERVLRQQFRAQTGMTINQYLRQVRICHAQYLLQHSPLMISEISMQCGFEDSNYFSVVFTRETGMTPSQWRHLSNQSD.

One can recognise an HTH araC/xylS-type domain in the interval 179-277; it reads DKLITALANS…GMTPSQWRHL (99 aa). 2 DNA-binding regions (H-T-H motif) span residues 196–217 and 244–267; these read DAFC…RAQT and ISEI…TRET.

In terms of assembly, binds DNA as a dimer.

It localises to the cytoplasm. In terms of biological role, activates expression of the rhaSR operon in response to L-rhamnose. This is HTH-type transcriptional activator RhaR from Salmonella agona (strain SL483).